Reading from the N-terminus, the 274-residue chain is MIRLENVSYCYPDGTPALTNINLTIRKGEYLGIIGRNGSGKSTLALHLNGLRRPQKGKVIVKGIDAGDFSKLQEVRKIVGIVFQNPETQFIGRTVEEDLAFGPENLCLPPTEIRKRVDRALAEIKLEKYRHHSPKSLSGGQGQCVALAGVLTMEPECLVFDEVTSMLDPDSGETVLRRIKKLHEKGKTIVYTTHNLEELHVADRILVMDRGRIVLEGEPENVLSDPSLKDLGLTPPSLIELAEQLKKHEIEISWENTSSPSSFAEELCRLFLKT.

The 234-residue stretch at 2 to 235 folds into the ABC transporter domain; the sequence is IRLENVSYCY…PSLKDLGLTP (234 aa). Position 35–42 (35–42) interacts with ATP; the sequence is GRNGSGKS.

Belongs to the ABC transporter superfamily.

The protein resides in the cell membrane. Probably part of an ABC transporter complex. Responsible for energy coupling to the transport system. The polypeptide is Putative ABC transporter ATP-binding protein MM_1037 (Methanosarcina mazei (strain ATCC BAA-159 / DSM 3647 / Goe1 / Go1 / JCM 11833 / OCM 88) (Methanosarcina frisia)).